The primary structure comprises 368 residues: MHPDVSADLSELDTTLRTVESVLDVEELRRRIDELEHQAADPELWNDQEHAQQVTSQLSHSQAELRRVEELRTRLDDMPVLYELAEDEGADAIADADAERHSLREDIAAMEVKTMLSGEYDERDALVNIRSGAGGVDAADWAEMLMRMYVRWAEKHGYGVEVYDTSYAEEAGIKSATFAVKAPYSYGTLSVEMGTHRLVRISPFDNQGRRQTSFAEVEVLPVVETTDHIDVNENDVRVDVYRSSGPGGQSVNTTDSAVRLTHIPTGIVVTCQNEKSQLQNKVSAMRVLQAKLLEVKRKEERAEMDALKGDGGSSWGNQMRSYVLHPYQMVKDLRTEYEVNNPSAVLDGDIDGFLESGIRWRMRENQAS.

Position 249 is an N5-methylglutamine (Gln-249).

This sequence belongs to the prokaryotic/mitochondrial release factor family. Methylated by PrmC. Methylation increases the termination efficiency of RF2.

Its subcellular location is the cytoplasm. Its function is as follows. Peptide chain release factor 2 directs the termination of translation in response to the peptide chain termination codons UGA and UAA. The protein is Peptide chain release factor 2 of Rhodococcus jostii (strain RHA1).